A 264-amino-acid chain; its full sequence is Hemin import ATP-binding protein HmuV (264 aa).

Positions 2 to 242 constitute an ABC transporter domain; it reads IEAVNICVQR…QNLSDAYHCS (241 aa). 34–41 is an ATP binding site; sequence GPNGSGKS.

Belongs to the ABC transporter superfamily. Heme (hemin) importer (TC 3.A.1.14.5) family. In terms of assembly, the complex is composed of two ATP-binding proteins (HmuV), two transmembrane proteins (HmuU) and a solute-binding protein (HmuT).

It localises to the cell inner membrane. Functionally, part of the ABC transporter complex HmuTUV involved in hemin import. Responsible for energy coupling to the transport system. The chain is Hemin import ATP-binding protein HmuV from Bartonella quintana (strain Toulouse) (Rochalimaea quintana).